A 458-amino-acid chain; its full sequence is Glycine--tRNA ligase (458 aa).

Arg-97 and Glu-171 together coordinate substrate. ATP-binding positions include 203-205 (RNE), 213-218 (FRTREF), 287-288 (EL), and 331-334 (GADR). 218–222 (FEQME) lines the substrate pocket. Residue 327–331 (EPSLG) coordinates substrate.

It belongs to the class-II aminoacyl-tRNA synthetase family. In terms of assembly, homodimer.

The protein resides in the cytoplasm. The enzyme catalyses tRNA(Gly) + glycine + ATP = glycyl-tRNA(Gly) + AMP + diphosphate. Catalyzes the attachment of glycine to tRNA(Gly). The chain is Glycine--tRNA ligase from Bacillus thuringiensis subsp. konkukian (strain 97-27).